A 105-amino-acid polypeptide reads, in one-letter code: Replication restart protein PriB (105 aa).

The 102-residue stretch at 1–102 folds into the SSB domain; sequence MTTNRLVLSG…LHAEQIELID (102 aa).

This sequence belongs to the PriB family. Homodimer. Interacts with PriA and DnaT. Component of the replication restart primosome. Primosome assembly occurs via a 'hand-off' mechanism. PriA binds to replication forks, subsequently PriB then DnaT bind; DnaT then displaces ssDNA to generate the helicase loading substrate.

Its function is as follows. Involved in the restart of stalled replication forks, which reloads the replicative helicase on sites other than the origin of replication; the PriA-PriB pathway is the major replication restart pathway. During primosome assembly it facilitates complex formation between PriA and DnaT on DNA; stabilizes PriA on DNA. Stimulates the DNA unwinding activity of PriA helicase. The polypeptide is Replication restart protein PriB (Photorhabdus laumondii subsp. laumondii (strain DSM 15139 / CIP 105565 / TT01) (Photorhabdus luminescens subsp. laumondii)).